The following is a 442-amino-acid chain: Amino-acid acetyltransferase (442 aa).

The 148-residue stretch at 295 to 442 (EQARAATIED…RSKVLSKTIS (148 aa)) folds into the N-acetyltransferase domain.

Belongs to the acetyltransferase family. ArgA subfamily.

The protein localises to the cytoplasm. It carries out the reaction L-glutamate + acetyl-CoA = N-acetyl-L-glutamate + CoA + H(+). The protein operates within amino-acid biosynthesis; L-arginine biosynthesis; N(2)-acetyl-L-ornithine from L-glutamate: step 1/4. The sequence is that of Amino-acid acetyltransferase from Aeromonas salmonicida (strain A449).